Reading from the N-terminus, the 52-residue chain is Large ribosomal subunit protein bL32c (52 aa).

Belongs to the bacterial ribosomal protein bL32 family.

The protein localises to the plastid. Its subcellular location is the chloroplast. This Arabis hirsuta (Hairy rock-cress) protein is Large ribosomal subunit protein bL32c.